The primary structure comprises 310 residues: Ribosomal RNA small subunit methyltransferase H (310 aa).

S-adenosyl-L-methionine is bound by residues 32–34 (GGH), Asp52, Phe79, Asp100, and Gln107.

The protein belongs to the methyltransferase superfamily. RsmH family.

The protein resides in the cytoplasm. It carries out the reaction cytidine(1402) in 16S rRNA + S-adenosyl-L-methionine = N(4)-methylcytidine(1402) in 16S rRNA + S-adenosyl-L-homocysteine + H(+). In terms of biological role, specifically methylates the N4 position of cytidine in position 1402 (C1402) of 16S rRNA. The polypeptide is Ribosomal RNA small subunit methyltransferase H (Bacillus mycoides (strain KBAB4) (Bacillus weihenstephanensis)).